A 790-amino-acid polypeptide reads, in one-letter code: Nitrogen permease reactivator protein (790 aa).

The segment at 1–68 (MSSLTRLLQE…DRNRANVPVP (68 aa)) is disordered. Polar residues predominate over residues 16 to 38 (TSNSSPRTSADTLTTTPESQSLD). The segment covering 46–58 (SSHIGSVSNSSSS) has biased composition (low complexity). Ser47 carries the phosphoserine; by autocatalysis modification. Residues Ser85, Ser90, Ser100, Ser111, Ser116, Ser125, Ser137, and Ser141 each carry the phosphoserine modification. A compositionally biased stretch (polar residues) spans 151–175 (RLSTTSHTSGRAIPSLSSSIPYSVP). Disordered stretches follow at residues 151 to 188 (RLST…NSNS) and 234 to 258 (LQKA…SGSF). The span at 176-188 (NSNKDNNSSNSNS) shows a compositional bias: low complexity. Residues 238-248 (SMDSNNANATQ) are compositionally biased toward polar residues. A compositionally biased stretch (low complexity) spans 249-258 (SRSISRSGSF). Phosphoserine; by autocatalysis is present on Ser257. Phosphoserine is present on residues Ser259, Ser260, Ser288, Ser292, Ser317, Ser320, and Ser328. The span at 276-289 (NSNSAGMSFSANSN) shows a compositional bias: low complexity. A disordered region spans residues 276-357 (NSNSAGMSFS…QSVPRSQHSS (82 aa)). Polar residues-rich tracts occupy residues 290–305 (GPSP…NGST), 314–339 (RQSS…SPSS), and 346–357 (PSQSVPRSQHSS). At Tyr334 the chain carries Phosphotyrosine. Ser336, Ser353, and Ser356 each carry phosphoserine. Ser357 is subject to Phosphoserine; by autocatalysis. Ser385 bears the Phosphoserine mark. One can recognise a Protein kinase domain in the interval 438 to 742 (IKTGADLGAG…IEEIMEDPWI (305 aa)). Residues 444–452 (LGAGAGGSV) and Lys467 each bind ATP. Asp561 (proton acceptor) is an active-site residue. 2 disordered regions span residues 666-704 (LVTR…NIGP) and 766-790 (HHTQ…QNNQ). A compositionally biased stretch (basic and acidic residues) spans 677–688 (DESHSTEKKKPE). Over residues 689-701 (SSSNNVSDPNNVN) the composition is skewed to low complexity.

This sequence belongs to the protein kinase superfamily. Ser/Thr protein kinase family. Interacts with TIP41. In terms of processing, hyperphosphorylated in nitrogen-rich growth medium. Nitrogen limitation (or rapamycin treatment) leads to substantial, though not complete dephosphorylation. Autophosphorylation plays only a minor role and seems not to be regulated by the quality of the nitrogen source.

It localises to the cytoplasm. The catalysed reaction is L-seryl-[protein] + ATP = O-phospho-L-seryl-[protein] + ADP + H(+). The enzyme catalyses L-threonyl-[protein] + ATP = O-phospho-L-threonyl-[protein] + ADP + H(+). Its activity is regulated as follows. Dephosphorylation by SIT4 activates NPR1 kinase activity. Nutrient-regulated protein kinase that promotes the activity of at least 6 distinct transport systems for nitrogenous nutrients under conditions of nitrogen catabolite derepression. Under poor nitrogen growth conditions, required for post-Golgi sorting of the general amino acid permease GAP1 and the three known ammonia permeases, MEP1/2/3, to the plasma membrane. Also contributes to the stability and the retention of GAP1 at the plasma membrane. Inversely, promotes the degradation of tryptophan permease TAT2 under the same conditions. Activity is regulated by the TOR signaling pathway via phosphatase SIT4. Although thought to be involved in regulation of GLN3-dependent transcription by nitrogen catabolite repression, this seems to be an indirect effect from the reduced uptake of the nitrogen-repressing compound. The chain is Nitrogen permease reactivator protein (NPR1) from Saccharomyces cerevisiae (strain ATCC 204508 / S288c) (Baker's yeast).